A 393-amino-acid polypeptide reads, in one-letter code: Putative zinc metalloprotease Rip3 (393 aa).

The next 2 membrane-spanning stretches (helical) occupy residues 10–30 (IAGFVVNVHWSVLVILWLFTW) and 45–65 (AVVYWLLGAGGAVMLLASLLA). H66 contacts Zn(2+). E67 is a catalytic residue. A Zn(2+)-binding site is contributed by H70. Transmembrane regions (helical) follow at residues 77–97 (AGVSVESVTLWLFGGVTALGG), 108–128 (IAFAGPATSLALSATFGALAI), 136–156 (PAIVISVAWWLATVNLLLGLF), and 207–227 (FVAGGLVGGVWLAFIGWFIFA). CBS domains lie at 251-308 (MTAQ…RRST) and 315-376 (ALPL…AQPE).

Belongs to the peptidase M50B family. It depends on Zn(2+) as a cofactor.

The protein localises to the cell membrane. This chain is Putative zinc metalloprotease Rip3 (rip3), found in Mycobacterium tuberculosis (strain ATCC 35801 / TMC 107 / Erdman).